The following is a 1409-amino-acid chain: DNA-directed RNA polymerase subunit beta' (1409 aa).

Zn(2+) is bound by residues Cys-72, Cys-74, Cys-87, and Cys-90. The Mg(2+) site is built by Asp-462, Asp-464, and Asp-466. Positions 816, 890, 897, and 900 each coordinate Zn(2+).

This sequence belongs to the RNA polymerase beta' chain family. As to quaternary structure, the RNAP catalytic core consists of 2 alpha, 1 beta, 1 beta' and 1 omega subunit. When a sigma factor is associated with the core the holoenzyme is formed, which can initiate transcription. The cofactor is Mg(2+). Zn(2+) is required as a cofactor.

The enzyme catalyses RNA(n) + a ribonucleoside 5'-triphosphate = RNA(n+1) + diphosphate. DNA-dependent RNA polymerase catalyzes the transcription of DNA into RNA using the four ribonucleoside triphosphates as substrates. The sequence is that of DNA-directed RNA polymerase subunit beta' from Aromatoleum aromaticum (strain DSM 19018 / LMG 30748 / EbN1) (Azoarcus sp. (strain EbN1)).